We begin with the raw amino-acid sequence, 556 residues long: Formate--tetrahydrofolate ligase (556 aa).

Residue 65–72 (TPAGEGKT) participates in ATP binding.

The protein belongs to the formate--tetrahydrofolate ligase family.

The enzyme catalyses (6S)-5,6,7,8-tetrahydrofolate + formate + ATP = (6R)-10-formyltetrahydrofolate + ADP + phosphate. It participates in one-carbon metabolism; tetrahydrofolate interconversion. This is Formate--tetrahydrofolate ligase from Maricaulis maris (strain MCS10) (Caulobacter maris).